The chain runs to 102 residues: A-type ATP synthase subunit F (102 aa).

The protein belongs to the V-ATPase F subunit family. Has multiple subunits with at least A(3), B(3), C, D, E, F, H, I and proteolipid K(x).

It localises to the cell membrane. Functionally, component of the A-type ATP synthase that produces ATP from ADP in the presence of a proton gradient across the membrane. This is A-type ATP synthase subunit F from Thermococcus gammatolerans (strain DSM 15229 / JCM 11827 / EJ3).